A 575-amino-acid chain; its full sequence is V-type ATP synthase alpha chain (575 aa).

238–245 provides a ligand contact to ATP; the sequence is GPFGAGKT.

The protein belongs to the ATPase alpha/beta chains family.

The enzyme catalyses ATP + H2O + 4 H(+)(in) = ADP + phosphate + 5 H(+)(out). Functionally, produces ATP from ADP in the presence of a proton gradient across the membrane. The V-type alpha chain is a catalytic subunit. The polypeptide is V-type ATP synthase alpha chain (Borrelia garinii subsp. bavariensis (strain ATCC BAA-2496 / DSM 23469 / PBi) (Borreliella bavariensis)).